Consider the following 288-residue polypeptide: Ribosomal RNA small subunit methyltransferase A (288 aa).

Asn37, Leu39, Gly64, Glu86, Asp112, and Asn131 together coordinate S-adenosyl-L-methionine.

Belongs to the class I-like SAM-binding methyltransferase superfamily. rRNA adenine N(6)-methyltransferase family. RsmA subfamily.

It is found in the cytoplasm. It catalyses the reaction adenosine(1518)/adenosine(1519) in 16S rRNA + 4 S-adenosyl-L-methionine = N(6)-dimethyladenosine(1518)/N(6)-dimethyladenosine(1519) in 16S rRNA + 4 S-adenosyl-L-homocysteine + 4 H(+). In terms of biological role, specifically dimethylates two adjacent adenosines (A1518 and A1519) in the loop of a conserved hairpin near the 3'-end of 16S rRNA in the 30S particle. May play a critical role in biogenesis of 30S subunits. This chain is Ribosomal RNA small subunit methyltransferase A, found in Rhodospirillum rubrum (strain ATCC 11170 / ATH 1.1.1 / DSM 467 / LMG 4362 / NCIMB 8255 / S1).